The following is a 449-amino-acid chain: Glucose-6-phosphate isomerase (449 aa).

Glu290 (proton donor) is an active-site residue. Residues His311 and Lys425 contribute to the active site.

Belongs to the GPI family.

Its subcellular location is the cytoplasm. The catalysed reaction is alpha-D-glucose 6-phosphate = beta-D-fructose 6-phosphate. It functions in the pathway carbohydrate biosynthesis; gluconeogenesis. Its pathway is carbohydrate degradation; glycolysis; D-glyceraldehyde 3-phosphate and glycerone phosphate from D-glucose: step 2/4. Functionally, catalyzes the reversible isomerization of glucose-6-phosphate to fructose-6-phosphate. This Clostridioides difficile (strain 630) (Peptoclostridium difficile) protein is Glucose-6-phosphate isomerase.